The primary structure comprises 337 residues: 4-hydroxythreonine-4-phosphate dehydrogenase (337 aa).

Positions 139 and 140 each coordinate substrate. H173, H218, and H273 together coordinate a divalent metal cation. Residues K281, N290, and R299 each contribute to the substrate site.

This sequence belongs to the PdxA family. In terms of assembly, homodimer. Zn(2+) is required as a cofactor. It depends on Mg(2+) as a cofactor. Requires Co(2+) as cofactor.

Its subcellular location is the cytoplasm. The enzyme catalyses 4-(phosphooxy)-L-threonine + NAD(+) = 3-amino-2-oxopropyl phosphate + CO2 + NADH. Its pathway is cofactor biosynthesis; pyridoxine 5'-phosphate biosynthesis; pyridoxine 5'-phosphate from D-erythrose 4-phosphate: step 4/5. Its function is as follows. Catalyzes the NAD(P)-dependent oxidation of 4-(phosphooxy)-L-threonine (HTP) into 2-amino-3-oxo-4-(phosphooxy)butyric acid which spontaneously decarboxylates to form 3-amino-2-oxopropyl phosphate (AHAP). The chain is 4-hydroxythreonine-4-phosphate dehydrogenase from Rhodopseudomonas palustris (strain ATCC BAA-98 / CGA009).